A 617-amino-acid chain; its full sequence is Autophagy-related protein 20 (617 aa).

Positions M1–R83 are disordered. Low complexity predominate over residues Q20–T31. Residues D48–D58 are compositionally biased toward basic and acidic residues. Residues D59 to T68 are compositionally biased toward acidic residues. Residues Y89–S209 form the PX domain. A 1,2-diacyl-sn-glycero-3-phospho-(1D-myo-inositol-3-phosphate) is bound by residues R126, S128, K152, and R175. A coiled-coil region spans residues Q403–Q440. Residues Y434–F516 are disordered. A compositionally biased stretch (basic and acidic residues) spans P454–S463. Positions D480 to P500 are enriched in polar residues.

This sequence belongs to the sorting nexin family. As to quaternary structure, forms a complex with SNX4/ATG24 and ATG17.

It is found in the endosome membrane. The protein localises to the preautophagosomal structure membrane. In terms of biological role, required for cytoplasm to vacuole transport (Cvt), pexophagy and mitophagy. Also involved in endoplasmic reticulum-specific autophagic process and is essential for the survival of cells subjected to severe ER stress. Functions in protein retrieval from the endocytic pathway. Required for proper sorting of the v-SNARE protein SNC1. Autophagy is required for proper vegetative growth, asexual/sexual reproduction, and full virulence. Autophagy is particularly involved in the biosynthesis of deoxynivalenol (DON), an important virulence determinant. The polypeptide is Autophagy-related protein 20 (Gibberella zeae (strain ATCC MYA-4620 / CBS 123657 / FGSC 9075 / NRRL 31084 / PH-1) (Wheat head blight fungus)).